The sequence spans 111 residues: Dynein light chain Tctex-type (111 aa).

The protein belongs to the dynein light chain Tctex-type family. In terms of assembly, the cytoplasmic dynein complex consists of two catalytic heavy chains (HCs) and a number of non-catalytic subunits presented by intermediate chains (ICs), light intermediate chains (LICs) and light chains (LCs).

It localises to the cytoplasm. The protein localises to the cytoskeleton. In terms of biological role, acts as one of several non-catalytic accessory components of the cytoplasmic dynein complex that are thought to be involved in linking dynein to cargos and to adapter proteins that regulate dynein function. Cytoplasmic dynein acts as a motor for the intracellular retrograde motility of vesicles and organelles along microtubules. Required for spermatid differentiation. Is not required for polarized transport in rhabdomere development and appears to be a non-essential component of the cytoplasmic dynein complex. The polypeptide is Dynein light chain Tctex-type (Dlc90F) (Drosophila melanogaster (Fruit fly)).